Reading from the N-terminus, the 206-residue chain is MPNSNPVAAWKALKDGNARFVAGQPLHPSQGIERRASLTQAQRPTAVVFGCGDSRVAAEILFDQGLGDMFVVRTAGHVIDNAVLGSIEYAVTVLKVPLIVVLGHDSCGAVKATLSALDEGEVPSGFVRDIVERVTPSILLGRKAGLSRVDEFEAQHVNETVAQLQMRSTAIAQGLAAGTQAIVGTTYHLADGRVELRSHLGDIGEV.

Lys-11 is covalently cross-linked (Isoglutamyl lysine isopeptide (Lys-Gln) (interchain with Q-Cter in protein Pup)). The Zn(2+) site is built by Cys-51, Asp-53, His-104, and Cys-107.

The protein belongs to the beta-class carbonic anhydrase family. As to quaternary structure, homotetramer. Requires Zn(2+) as cofactor.

The enzyme catalyses hydrogencarbonate + H(+) = CO2 + H2O. Functionally, catalyzes the reversible hydration of carbon dioxide to form bicarbonate. This Mycolicibacterium smegmatis (strain ATCC 700084 / mc(2)155) (Mycobacterium smegmatis) protein is Carbonic anhydrase (cynT).